The primary structure comprises 95 residues: MVRIRLTRMGKKKQPFYRIVVVDQRKRRDGAYIESLGYYDPIKDPYILNVDVDKAVDWILKGAQPSQTVKNLLRKAGVFKKVDEIKRTKKKEENQ.

Belongs to the bacterial ribosomal protein bS16 family.

In Thermosipho melanesiensis (strain DSM 12029 / CIP 104789 / BI429), this protein is Small ribosomal subunit protein bS16.